The primary structure comprises 42 residues: Photosystem I reaction center subunit IX (42 aa).

Residues 7–27 form a helical membrane-spanning segment; sequence YLSTAPVLAAIWFAILAGLLI.

It belongs to the PsaJ family.

The protein resides in the plastid. It localises to the chloroplast thylakoid membrane. Its function is as follows. May help in the organization of the PsaE and PsaF subunits. The chain is Photosystem I reaction center subunit IX from Zygnema circumcarinatum (Green alga).